Consider the following 511-residue polypeptide: IWS1-like protein (511 aa).

Residues 1 to 200 (MSDHEEESHG…DDGPVDRHGR (200 aa)) form a disordered region. 2 stretches are compositionally biased toward low complexity: residues 11 to 30 (ASPT…PISP) and 55 to 86 (APAS…SPVK). The span at 94 to 103 (DSDEDSDAEE) shows a compositional bias: acidic residues. The span at 134–143 (HEGTSKKEPT) shows a compositional bias: basic and acidic residues. Acidic residues predominate over residues 166-179 (LDEFVEGRDEEESQ). The 81-residue stretch at 294 to 374 (SALSEWLAPL…GEWARPIYHL (81 aa)) folds into the TFIIS N-terminal domain. The segment at 382–454 (SRQEREERDY…RARVPKPSTK (73 aa)) is disordered. 2 stretches are compositionally biased toward basic and acidic residues: residues 383-395 (RQER…SRMP) and 414-425 (DQPKRPRIRDAD).

It belongs to the IWS1 family.

It localises to the nucleus. The sequence is that of IWS1-like protein from Caenorhabditis elegans.